Here is a 353-residue protein sequence, read N- to C-terminus: Small ribosomal subunit biogenesis GTPase RsgA (353 aa).

Polar residues predominate over residues 1-17; the sequence is MSKNKLSKGQQRRVNAN. Residues 1–25 form a disordered region; sequence MSKNKLSKGQQRRVNANHQRRLKTT. Residues 104–274 enclose the CP-type G domain; that stretch reads ASVLTRPDFY…VIDSPGVREF (171 aa). Residues 160-163 and 214-222 each bind GTP; these read NKID and GQSGVGKSS. Zn(2+) is bound by residues C298, C303, H305, and C311.

Belongs to the TRAFAC class YlqF/YawG GTPase family. RsgA subfamily. As to quaternary structure, monomer. Associates with 30S ribosomal subunit, binds 16S rRNA. The cofactor is Zn(2+).

The protein resides in the cytoplasm. Its function is as follows. One of several proteins that assist in the late maturation steps of the functional core of the 30S ribosomal subunit. Helps release RbfA from mature subunits. May play a role in the assembly of ribosomal proteins into the subunit. Circularly permuted GTPase that catalyzes slow GTP hydrolysis, GTPase activity is stimulated by the 30S ribosomal subunit. The polypeptide is Small ribosomal subunit biogenesis GTPase RsgA (Klebsiella pneumoniae (strain 342)).